An 804-amino-acid chain; its full sequence is Enhancer of polycomb homolog 2 (804 aa).

Disordered stretches follow at residues 372-398 (QSSDDDEFPQVPSPLSELEEENDPDGS), 484-507 (GFSSSSHVAQPPSSPSRTNASDRH), 602-623 (QQSQQSLQQSHPKAQGSAKSDC), and 642-669 (NSPTPGRSEVNKDQNAGHSNLNGVVQPS). Residues 602–611 (QQSQQSLQQS) show a composition bias toward low complexity. Over residues 654–669 (DQNAGHSNLNGVVQPS) the composition is skewed to polar residues.

The protein belongs to the enhancer of polycomb family.

The protein resides in the nucleus. May play a role in transcription or DNA repair. The polypeptide is Enhancer of polycomb homolog 2 (epc2) (Xenopus tropicalis (Western clawed frog)).